The chain runs to 363 residues: Putative type I specificity subunit S.MpnORF507P (363 aa).

Belongs to the type-I restriction system S methylase family. The methyltransferase is composed of M and S polypeptides.

The specificity (S) subunit of a type I methyltransferase (MTase); this subunit dictates DNA sequence specificity. The single R subunit has multiple frameshifts and is probably not expressed. The polypeptide is Putative type I specificity subunit S.MpnORF507P (Mycoplasma pneumoniae (strain ATCC 29342 / M129 / Subtype 1) (Mycoplasmoides pneumoniae)).